The primary structure comprises 527 residues: Bifunctional purine biosynthesis protein PurH (527 aa).

In terms of domain architecture, MGS-like spans 1–149; sequence MASDFLPVRR…KNFARVAVAT (149 aa).

It belongs to the PurH family.

The enzyme catalyses (6R)-10-formyltetrahydrofolate + 5-amino-1-(5-phospho-beta-D-ribosyl)imidazole-4-carboxamide = 5-formamido-1-(5-phospho-D-ribosyl)imidazole-4-carboxamide + (6S)-5,6,7,8-tetrahydrofolate. It carries out the reaction IMP + H2O = 5-formamido-1-(5-phospho-D-ribosyl)imidazole-4-carboxamide. It functions in the pathway purine metabolism; IMP biosynthesis via de novo pathway; 5-formamido-1-(5-phospho-D-ribosyl)imidazole-4-carboxamide from 5-amino-1-(5-phospho-D-ribosyl)imidazole-4-carboxamide (10-formyl THF route): step 1/1. It participates in purine metabolism; IMP biosynthesis via de novo pathway; IMP from 5-formamido-1-(5-phospho-D-ribosyl)imidazole-4-carboxamide: step 1/1. This chain is Bifunctional purine biosynthesis protein PurH, found in Xanthomonas oryzae pv. oryzae (strain KACC10331 / KXO85).